Consider the following 186-residue polypeptide: Putative 3-methyladenine DNA glycosylase (186 aa).

The protein belongs to the DNA glycosylase MPG family.

The protein is Putative 3-methyladenine DNA glycosylase of Borrelia garinii subsp. bavariensis (strain ATCC BAA-2496 / DSM 23469 / PBi) (Borreliella bavariensis).